Here is a 656-residue protein sequence, read N- to C-terminus: UvrABC system protein B (656 aa).

Positions 24–409 (QGVRNRTPSQ…QGHIVEQILR (386 aa)) constitute a Helicase ATP-binding domain. 37–44 (GTTGSGKT) serves as a coordination point for ATP. Positions 90–113 (YYDYYQPEAYIARNDTYIEKSLLI) match the Beta-hairpin motif. The region spanning 426 to 589 (QVDDLLEEIR…ITPKPIIKAI (164 aa)) is the Helicase C-terminal domain. Residues 616 to 651 (EKLIKKYENLMLQAANAFRFDEAAQYRDKMKAAKEQ) enclose the UVR domain.

The protein belongs to the UvrB family. In terms of assembly, forms a heterotetramer with UvrA during the search for lesions. Interacts with UvrC in an incision complex.

It localises to the cytoplasm. In terms of biological role, the UvrABC repair system catalyzes the recognition and processing of DNA lesions. A damage recognition complex composed of 2 UvrA and 2 UvrB subunits scans DNA for abnormalities. Upon binding of the UvrA(2)B(2) complex to a putative damaged site, the DNA wraps around one UvrB monomer. DNA wrap is dependent on ATP binding by UvrB and probably causes local melting of the DNA helix, facilitating insertion of UvrB beta-hairpin between the DNA strands. Then UvrB probes one DNA strand for the presence of a lesion. If a lesion is found the UvrA subunits dissociate and the UvrB-DNA preincision complex is formed. This complex is subsequently bound by UvrC and the second UvrB is released. If no lesion is found, the DNA wraps around the other UvrB subunit that will check the other stand for damage. The sequence is that of UvrABC system protein B from Chlamydia abortus (strain DSM 27085 / S26/3) (Chlamydophila abortus).